A 94-amino-acid chain; its full sequence is Trp operon repressor homolog (94 aa).

The DNA-binding element occupies 58-81 (QREIAEKYGVSIAQITRGSNALKG).

The protein belongs to the TrpR family. Homodimer.

It localises to the cytoplasm. Functionally, this protein is an aporepressor. When complexed with L-tryptophan it binds the operator region of the trp operon and prevents the initiation of transcription. The sequence is that of Trp operon repressor homolog from Chlamydia trachomatis serovar A (strain ATCC VR-571B / DSM 19440 / HAR-13).